We begin with the raw amino-acid sequence, 164 residues long: Phosphopantetheine adenylyltransferase (164 aa).

Residue serine 9 coordinates substrate. Residues 9–10 and histidine 17 contribute to the ATP site; that span reads SF. Lysine 41, leucine 73, and lysine 87 together coordinate substrate. ATP-binding positions include 88-90, glutamate 98, and 122-128; these read GLR and YSYLSSS.

Belongs to the bacterial CoaD family. As to quaternary structure, homohexamer. Requires Mg(2+) as cofactor.

The protein localises to the cytoplasm. The enzyme catalyses (R)-4'-phosphopantetheine + ATP + H(+) = 3'-dephospho-CoA + diphosphate. It participates in cofactor biosynthesis; coenzyme A biosynthesis; CoA from (R)-pantothenate: step 4/5. Its function is as follows. Reversibly transfers an adenylyl group from ATP to 4'-phosphopantetheine, yielding dephospho-CoA (dPCoA) and pyrophosphate. This Rhodococcus jostii (strain RHA1) protein is Phosphopantetheine adenylyltransferase.